Reading from the N-terminus, the 66-residue chain is Conotoxin Ca5.2 (66 aa).

Positions 1–22 (MRCVPVFLILLGLIASAPSVDA) are cleaved as a signal peptide. Residues 23–48 (RPQTKDDALASFHDSAKRHLQRLVNA) constitute a propeptide that is removed on maturation. F62 bears the Phenylalanine amide mark.

Belongs to the conotoxin T superfamily. In terms of processing, contains 2 disulfide bonds that can be either 'C1-C3, C2-C4' or 'C1-C4, C2-C3', since these disulfide connectivities have been observed for conotoxins with cysteine framework V (for examples, see AC P0DQQ7 and AC P81755). Expressed by the venom duct.

Its subcellular location is the secreted. The polypeptide is Conotoxin Ca5.2 (Conus caracteristicus (Characteristic cone)).